Here is a 422-residue protein sequence, read N- to C-terminus: Cyclin-A2 (422 aa).

An N-acetylmethionine modification is found at methionine 1. A disordered region spans residues 1–62 (MPGTSRHSGR…APQQKLKTRR (62 aa)). Serine 5 is modified (phosphoserine).

Belongs to the cyclin family. Cyclin AB subfamily. As to quaternary structure, interacts with the CDK1 and CDK2 protein kinases to form serine/threonine kinase holoenzyme complexes. Interacts with CDK1 (hyperphosphorylated form in G1 and underphosphorylated forms in S and G2). Interacts with CDK2; the interaction increases from G1 to G2. Interacts (associated with CDK2 but not with CDK1) with SCAPER; regulates the activity of CCNA2/CDK2 by transiently maintaining CCNA2 in the cytoplasm. Forms a ternary complex with CDK2 and CDKN1B; CDKN1B inhibits the kinase activity of CDK2 through conformational rearrangements. Interacts with INCA1. (Microbial infection) Interacts with mouse cytomegalovirus/MCMV kinase M97; this interaction sequesters CCNA2 to the cytoplasm. Post-translationally, polyubiquitinated via 'Lys-11'-linked ubiquitin by the anaphase-promoting complex (APC/C), leading to its degradation by the proteasome. Deubiquitinated and stabilized by USP37 enables entry into S phase. Ubiquitinated during the G1 phase by the SCF(FBXO31) complex, leading to its proteasomal degradation. In terms of tissue distribution, ubiquitous. In the testis, expressed in germ cells and in the ovary, in both germline and somatic cells.

Its subcellular location is the nucleus. It is found in the cytoplasm. Functionally, cyclin which controls both the G1/S and the G2/M transition phases of the cell cycle. Functions through the formation of specific serine/threonine kinase holoenzyme complexes with the cyclin-dependent protein kinases CDK1 and CDK2. The cyclin subunit confers the substrate specificity of these complexes and differentially interacts with and activates CDK1 and CDK2 throughout the cell cycle. The protein is Cyclin-A2 of Mus musculus (Mouse).